Here is a 101-residue protein sequence, read N- to C-terminus: Protein E7 (101 aa).

Positions 1 to 40 (MHGKYPTLKDIVLELTPDPVGLHCNEQLDSSEDEVDEQAT) are E7 terminal domain. The LXCXE motif; interaction with host RB1 and TMEM173/STING signature appears at 22–26 (LHCNE). The segment at 61–97 (CSKCCSNVRLVVECTGPDIHDLHDLLLGTLNIVCPLC) is a zinc-finger region. The Nuclear export signal signature appears at 79–87 (IHDLHDLLL).

The protein belongs to the papillomaviridae E7 protein family. As to quaternary structure, homodimer. Homooligomer. Interacts with host RB1; this interaction induces dissociation of RB1-E2F1 complex thereby disrupting RB1 activity. Interacts with host EP300; this interaction represses EP300 transcriptional activity. Interacts with protein E2; this interaction inhibits E7 oncogenic activity. Interacts with host TMEM173/STING; this interaction impairs the ability of TMEM173/STING to sense cytosolic DNA and promote the production of type I interferon (IFN-alpha and IFN-beta). Highly phosphorylated.

It is found in the host cytoplasm. The protein localises to the host nucleus. Functionally, plays a role in viral genome replication by driving entry of quiescent cells into the cell cycle. Stimulation of progression from G1 to S phase allows the virus to efficiently use the cellular DNA replicating machinery to achieve viral genome replication. E7 protein has both transforming and trans-activating activities. Induces the disassembly of the E2F1 transcription factor from RB1, with subsequent transcriptional activation of E2F1-regulated S-phase genes. Interferes with host histone deacetylation mediated by HDAC1 and HDAC2, leading to transcription activation. Also plays a role in the inhibition of both antiviral and antiproliferative functions of host interferon alpha. Interaction with host TMEM173/STING impairs the ability of TMEM173/STING to sense cytosolic DNA and promote the production of type I interferon (IFN-alpha and IFN-beta). This is Protein E7 from Human papillomavirus 13.